A 212-amino-acid chain; its full sequence is 3-isopropylmalate dehydratase small subunit (212 aa).

It belongs to the LeuD family. LeuD type 1 subfamily. As to quaternary structure, heterodimer of LeuC and LeuD.

The enzyme catalyses (2R,3S)-3-isopropylmalate = (2S)-2-isopropylmalate. It participates in amino-acid biosynthesis; L-leucine biosynthesis; L-leucine from 3-methyl-2-oxobutanoate: step 2/4. Functionally, catalyzes the isomerization between 2-isopropylmalate and 3-isopropylmalate, via the formation of 2-isopropylmaleate. The chain is 3-isopropylmalate dehydratase small subunit from Nitrosomonas eutropha (strain DSM 101675 / C91 / Nm57).